Reading from the N-terminus, the 815-residue chain is Protein-glutamine gamma-glutamyltransferase K (815 aa).

Residues 1–10 (MEGPRSDVGR) are compositionally biased toward basic and acidic residues. 2 disordered regions span residues 1-48 (MEGP…SFWA) and 62-101 (DDWGPEPSGSRSRGTSSRGRDSRGGRRPESRGSGVNAAGD). Over residues 16 to 25 (WQPPTTPSPE) the composition is skewed to pro residues. Thr-21 carries the post-translational modification Phosphothreonine. Phosphoserine occurs at positions 23, 71, 83, 91, and 94. Low complexity predominate over residues 66–78 (PEPSGSRSRGTSS). Positions 79-91 (RGRDSRGGRRPES) are enriched in basic and acidic residues. Active-site residues include Cys-376, His-435, and Asp-458. Residues Asn-498, Asp-500, Glu-547, and Glu-552 each coordinate Ca(2+). The interval 791–815 (GSGFSDAGGDSRSGENIPMAYRGGA) is disordered. Ser-803 is subject to Phosphoserine.

Belongs to the transglutaminase superfamily. Transglutaminase family. As to quaternary structure, interacts with PLAAT4. Ca(2+) serves as cofactor. In terms of processing, tyrosine-phosphorylated. Post-translationally, palmitoylated. The membrane anchorage region possesses a cluster of five cysteines within which fatty acid(s) may become thioester-linked. It is subject to phorbol ester-stimulated phosphorylation and is hypersensitive to proteolysis, which releases the enzyme in a soluble form. As to expression, expressed in large amounts in epithelial tissues (lung, liver and kidney).

The protein resides in the membrane. The enzyme catalyses L-glutaminyl-[protein] + L-lysyl-[protein] = [protein]-L-lysyl-N(6)-5-L-glutamyl-[protein] + NH4(+). In terms of biological role, catalyzes the cross-linking of proteins and the conjugation of polyamines to proteins. Responsible for cross-linking epidermal proteins during formation of the stratum corneum. Involved in cell proliferation. The protein is Protein-glutamine gamma-glutamyltransferase K (Tgm1) of Mus musculus (Mouse).